The chain runs to 565 residues: NAD-dependent malic enzyme (565 aa).

The active-site Proton donor is Tyr-104. Arg-157 contacts NAD(+). The active-site Proton acceptor is the Lys-175. A divalent metal cation contacts are provided by Glu-246, Asp-247, and Asp-270. NAD(+) is bound by residues Asp-270 and Asn-418.

It belongs to the malic enzymes family. In terms of assembly, homotetramer. It depends on Mg(2+) as a cofactor. The cofactor is Mn(2+).

The catalysed reaction is (S)-malate + NAD(+) = pyruvate + CO2 + NADH. It catalyses the reaction oxaloacetate + H(+) = pyruvate + CO2. The chain is NAD-dependent malic enzyme from Klebsiella pneumoniae subsp. pneumoniae (strain ATCC 700721 / MGH 78578).